The chain runs to 253 residues: CD151 antigen (253 aa).

At 1 to 18 (MGEFNEKKATCGTVCLKY) the chain is on the cytoplasmic side. S-palmitoyl cysteine attachment occurs at residues C11 and C15. Residues 19-39 (LLFTYNCCFWLAGLAVMAVGI) traverse the membrane as a helical segment. At 40–57 (WTLALKSDYISLLASSTY) the chain is on the extracellular side. A helical transmembrane segment spans residues 58–78 (LATAYILVVAGVVVMVTGVLG). Residues 79-91 (CCATFKERRNLLR) are Cytoplasmic-facing. Residues 92–112 (LYFILLLIIFLLEIIAGILAY) traverse the membrane as a helical segment. The Extracellular portion of the chain corresponds to 113–221 (VYYQQLNTEL…LETFIQEHLR (109 aa)). An N-linked (GlcNAc...) asparagine glycan is attached at N159. Residues 222–242 (VIGAVGIGIACVQVFGMIFTC) form a helical membrane-spanning segment. S-palmitoyl cysteine attachment occurs at residues C242 and C243. The Cytoplasmic segment spans residues 243–253 (CLYRSLKLEHY).

It belongs to the tetraspanin (TM4SF) family. As to quaternary structure, interacts with integrins ITGA3:ITGB1, ITGA5:ITGB1, ITGA3:ITGB1 and ITGA6:ITGB4 and with CD9 and CD181. Interacts (via the second extracellular domain) with integrin ITGAV:ITGB3. Interacts with ITGA3; this interaction modulates ITGA3 glycosylation pattern. Interacts with F11R. Interacts with RAC1 and CDC42; these interactions mediate physical association of RAC1 and CDC42 with integrin adhesion receptor complexes. Palmitoylated. Palmitoylation by ZDHHC2 regulates CD151 expression, association with other tetraspanin family proteins and function in cell adhesion. Post-translationally, ubiquitinated by RNF128 on lysine residues present in the tetraspanin amino terminus via 'Lys-48'-linked ubiquitin leading to proteasomal degradation.

The protein resides in the cell membrane. Functionally, structural component of specialized membrane microdomains known as tetraspanin-enriched microdomains (TERMs), which act as platforms for receptor clustering and signaling. Plays a role in various cellular and molecular mechanism through its association with both integrin and non-integrin proteins. These interactions facilitate critical cellular functions, including cell-to-cell communication, wound healing, platelet aggregation, trafficking, cell motility, and angiogenesis. Via interaction with JAM-A/F11R and integrin ITGA3:ITGB1, promotes the recruitment of signaling molecules such as RAC1, CDC42 and RhoGTPases to facilitate the polarization of epithelial cells and the reorganization of the actin cytoskeleton, which are critical steps in cell migration process. Regulates the glycosylation pattern of ITGA3:ITGB1 thereby modulating its activity. Plays an essential role in the maintenance of central laminin-binding integrin ITGA6:ITGB4-containing adhesion complexes. Essential for the proper assembly of the glomerular and tubular basement membranes in kidney. Contributes to T-cell activation by modulating integrin signaling leading to activation of downstream targets PTK2 and MAPK1/MAPK3. The sequence is that of CD151 antigen (Cd151) from Mus musculus (Mouse).